The primary structure comprises 476 residues: Cytosolic Fe-S cluster assembly factor narfl (476 aa).

Positions 24, 71, 74, 77, 190, 246, 395, and 399 each coordinate [4Fe-4S] cluster.

It belongs to the NARF family. As to quaternary structure, component of the CIA complex.

Its function is as follows. Component of the cytosolic iron-sulfur protein assembly (CIA) complex, a multiprotein complex that mediates the incorporation of iron-sulfur cluster into extramitochondrial Fe/S proteins. The protein is Cytosolic Fe-S cluster assembly factor narfl (narfl) of Xenopus tropicalis (Western clawed frog).